A 239-amino-acid polypeptide reads, in one-letter code: UDP-2,3-diacylglucosamine hydrolase (239 aa).

Asp8, His10, Asp41, Asn78, and His113 together coordinate Mn(2+). Position 78–79 (78–79) interacts with substrate; that stretch reads NR. Positions 121, 159, 163, 166, and 194 each coordinate substrate. 2 residues coordinate Mn(2+): His194 and His196.

The protein belongs to the LpxH family. Requires Mn(2+) as cofactor.

It localises to the cell inner membrane. It catalyses the reaction UDP-2-N,3-O-bis[(3R)-3-hydroxytetradecanoyl]-alpha-D-glucosamine + H2O = 2-N,3-O-bis[(3R)-3-hydroxytetradecanoyl]-alpha-D-glucosaminyl 1-phosphate + UMP + 2 H(+). Its pathway is glycolipid biosynthesis; lipid IV(A) biosynthesis; lipid IV(A) from (3R)-3-hydroxytetradecanoyl-[acyl-carrier-protein] and UDP-N-acetyl-alpha-D-glucosamine: step 4/6. In terms of biological role, hydrolyzes the pyrophosphate bond of UDP-2,3-diacylglucosamine to yield 2,3-diacylglucosamine 1-phosphate (lipid X) and UMP by catalyzing the attack of water at the alpha-P atom. Involved in the biosynthesis of lipid A, a phosphorylated glycolipid that anchors the lipopolysaccharide to the outer membrane of the cell. This chain is UDP-2,3-diacylglucosamine hydrolase, found in Shewanella sp. (strain MR-7).